A 287-amino-acid polypeptide reads, in one-letter code: Nucleotide-binding protein Pmob_0154 (287 aa).

ATP is bound at residue 15–22; sequence GLSGAGKT. 64–67 is a GTP binding site; sequence DIRW.

The protein belongs to the RapZ-like family.

Its function is as follows. Displays ATPase and GTPase activities. The polypeptide is Nucleotide-binding protein Pmob_0154 (Petrotoga mobilis (strain DSM 10674 / SJ95)).